The sequence spans 121 residues: Large ribosomal subunit protein bL12 (121 aa).

It belongs to the bacterial ribosomal protein bL12 family. As to quaternary structure, homodimer. Part of the ribosomal stalk of the 50S ribosomal subunit. Forms a multimeric L10(L12)X complex, where L10 forms an elongated spine to which 2 to 4 L12 dimers bind in a sequential fashion. Binds GTP-bound translation factors.

Forms part of the ribosomal stalk which helps the ribosome interact with GTP-bound translation factors. Is thus essential for accurate translation. The polypeptide is Large ribosomal subunit protein bL12 (Clostridium novyi (strain NT)).